Consider the following 542-residue polypeptide: La-related protein 7 homolog (542 aa).

The HTH La-type RNA-binding domain occupies 112-239 (VAEELDIKES…KRRFPFNLEQ (128 aa)). The 89-residue stretch at 247–335 (RTLYIDFLPP…GSIRIITYKK (89 aa)) folds into the RRM domain. One can recognise a xRRM domain in the interval 374–542 (EIKQNCLIKI…KQNITQNYNK (169 aa)).

Belongs to the LARP7 family. As to quaternary structure, component of the telomerase holoenzyme complex, composed of the catalytic core (the catalytic subunit TERT, the telomerase RNA template component TER and TAP65/p65), which is associated with two heterotrimeric subcomplexes: (i) the replication protein A (RPA)-related subcomplex, composed of TEB1, RPA2/TEB2 and RPA3/TEB3 and (ii) the CST-like subcomplex, composed of TAP75/p75, TAP45/p45 and TAP19/p19. TEB1 and the CST-like subcomplex are tethered to the catalytic core by TAP50/p50.

Its subcellular location is the chromosome. The protein resides in the telomere. Functionally, RNA-binding protein required for assembly of the holoenzyme telomerase ribonucleoprotein (RNP) complex. Telomerase is an essential ribonucleoprotein enzyme that copies new telomeric repeats onto chromosome ends by repetitively synthesizing the short telomere-repeat sequence 5'-TTGGGG-3' using an RNA template component TER. TAP65/p65 specifically binds telomerase RNA template TER and is required for biogenesis and placement of the TER stem-terminus element: TAP65/p65 first protects the 3'-end of TER from degradation and acts as a chaperone to correctly fold TER for protein binding; it then bends TER stem-loop IV to position it for interaction of stem-loop IV with catalytic TERT RNA-binding domain. The polypeptide is La-related protein 7 homolog (Tetrahymena thermophila (strain SB210)).